The following is a 457-amino-acid chain: Methanethiol oxidase (457 aa).

The protein belongs to the selenium-binding protein family.

It is found in the nucleus. Its subcellular location is the cytoplasm. The protein localises to the cytosol. The protein resides in the membrane. It carries out the reaction methanethiol + O2 + H2O = hydrogen sulfide + formaldehyde + H2O2 + H(+). It functions in the pathway organosulfur degradation. Catalyzes the oxidation of methanethiol, an organosulfur compound known to be produced in substantial amounts by gut bacteria. Selenium-binding protein which may be involved in the sensing of reactive xenobiotics in the cytoplasm. May be involved in intra-Golgi protein transport. The polypeptide is Methanethiol oxidase (selenbp1) (Danio rerio (Zebrafish)).